Consider the following 218-residue polypeptide: LHFPL tetraspan subfamily member 3 protein (218 aa).

Helical transmembrane passes span 22–42 (IGVL…VCFI), 96–116 (FFIG…GLFF), 126–146 (ICAW…MIFP), and 177–197 (ILAI…FVLG).

It belongs to the LHFP family.

The protein resides in the membrane. The polypeptide is LHFPL tetraspan subfamily member 3 protein (Xenopus laevis (African clawed frog)).